The chain runs to 115 residues: U3-lycotoxin-Ls1a (115 aa).

A signal peptide spans 1 to 20 (MKFVLLFGVLLVTLFSYSSA). Positions 21-44 (EMLDDFDQAVEDELLSLIEKEEAR) are excised as a propeptide. Intrachain disulfides connect Cys48–Cys63, Cys55–Cys72, Cys62–Cys87, and Cys74–Cys85.

Belongs to the neurotoxin 19 (CSTX) family. 01 subfamily. Expressed by the venom gland.

The protein resides in the secreted. This is U3-lycotoxin-Ls1a from Lycosa singoriensis (Wolf spider).